The primary structure comprises 552 residues: CTP synthase (552 aa).

The segment at 1–270 (MTKFVFVTGG…DGLICDKLRL (270 aa)) is amidoligase domain. CTP is bound at residue Ser-13. Ser-13 contacts UTP. Residues 14-19 (SLGKGI) and Asp-71 contribute to the ATP site. Mg(2+) is bound by residues Asp-71 and Glu-144. Residues 151-153 (DIE), 191-196 (KTKPTQ), and Lys-227 contribute to the CTP site. UTP contacts are provided by residues 191 to 196 (KTKPTQ) and Lys-227. Residues 295-548 (QIAMVGKYVE…IKAAVEHQKP (254 aa)) enclose the Glutamine amidotransferase type-1 domain. An L-glutamine-binding site is contributed by Gly-357. Cys-384 acts as the Nucleophile; for glutamine hydrolysis in catalysis. Residues 385-388 (LGMQ) and Glu-408 each bind L-glutamine. Residues 432 to 451 (KTRSENSDLGGTMRLGAQSS) form a disordered region. Arg-474 is a binding site for L-glutamine. Residues His-521 and Glu-523 contribute to the active site.

Belongs to the CTP synthase family. In terms of assembly, homotetramer.

It carries out the reaction UTP + L-glutamine + ATP + H2O = CTP + L-glutamate + ADP + phosphate + 2 H(+). The catalysed reaction is L-glutamine + H2O = L-glutamate + NH4(+). The enzyme catalyses UTP + NH4(+) + ATP = CTP + ADP + phosphate + 2 H(+). It participates in pyrimidine metabolism; CTP biosynthesis via de novo pathway; CTP from UDP: step 2/2. Allosterically activated by GTP, when glutamine is the substrate; GTP has no effect on the reaction when ammonia is the substrate. The allosteric effector GTP functions by stabilizing the protein conformation that binds the tetrahedral intermediate(s) formed during glutamine hydrolysis. Inhibited by the product CTP, via allosteric rather than competitive inhibition. In terms of biological role, catalyzes the ATP-dependent amination of UTP to CTP with either L-glutamine or ammonia as the source of nitrogen. Regulates intracellular CTP levels through interactions with the four ribonucleotide triphosphates. The protein is CTP synthase of Acidovorax sp. (strain JS42).